A 99-amino-acid chain; its full sequence is Aspartyl/glutamyl-tRNA(Asn/Gln) amidotransferase subunit C (99 aa).

This sequence belongs to the GatC family. As to quaternary structure, heterotrimer of A, B and C subunits.

The enzyme catalyses L-glutamyl-tRNA(Gln) + L-glutamine + ATP + H2O = L-glutaminyl-tRNA(Gln) + L-glutamate + ADP + phosphate + H(+). It catalyses the reaction L-aspartyl-tRNA(Asn) + L-glutamine + ATP + H2O = L-asparaginyl-tRNA(Asn) + L-glutamate + ADP + phosphate + 2 H(+). In terms of biological role, allows the formation of correctly charged Asn-tRNA(Asn) or Gln-tRNA(Gln) through the transamidation of misacylated Asp-tRNA(Asn) or Glu-tRNA(Gln) in organisms which lack either or both of asparaginyl-tRNA or glutaminyl-tRNA synthetases. The reaction takes place in the presence of glutamine and ATP through an activated phospho-Asp-tRNA(Asn) or phospho-Glu-tRNA(Gln). The polypeptide is Aspartyl/glutamyl-tRNA(Asn/Gln) amidotransferase subunit C (Polaromonas naphthalenivorans (strain CJ2)).